A 587-amino-acid chain; its full sequence is Complement component C8 beta chain (587 aa).

Positions 1-31 (MNHKLKPTVGLGYCLLCAALCLLLLRDVAIA) are cleaved as a signal peptide. The propeptide occupies 32–44 (GSGEEPSGVREAR). One can recognise a TSP type-1 1 domain in the interval 56 to 111 (DCVQSEWSSWTRCDVCRKKRYRYAKLVQPSQFGGEPCHVQGKEVEPCSPPSRYDCT). Intrachain disulfides connect cysteine 57/cysteine 92, cysteine 68/cysteine 102, cysteine 71/cysteine 110, cysteine 118/cysteine 129, and cysteine 123/cysteine 142. C-linked (Man) tryptophan glycans are attached at residues tryptophan 62 and tryptophan 65. The LDL-receptor class A domain occupies 117–159 (LCEGFLCTYTGRCVPIDLRCNGDDDCGDWSAEKGSPKVPKACK). Ca(2+) is bound by residues leucine 134, asparagine 137, aspartate 139, aspartate 141, and glutamate 148. In terms of domain architecture, MACPF spans 154–500 (VPKACKQEAQ…EYLEESSSCR (347 aa)). The cysteines at positions 158 and 196 are disulfide-linked. A run of 4 beta stranded transmembrane segments spans residues 248-255 (TTVSIGFA), 258-265 (GVAEFGFN), 375-382 (EQIVLKVG), and 388-395 (VYVTVGLE). Cystine bridges form between cysteine 374-cysteine 399, cysteine 499-cysteine 546, cysteine 501-cysteine 517, cysteine 504-cysteine 519, and cysteine 521-cysteine 530. The 31-residue stretch at 501–531 (CAPCRNNGLAVLKGTRCECVCPSGYSGLGCE) folds into the EGF-like domain. The TSP type-1 2 domain occupies 541–587 (DGSWSCWGSWSPCRGRSKTRSRQCNNPAPSSGGIACRGLQMETTDCF). C-linked (Man) tryptophan glycosylation is found at tryptophan 547 and tryptophan 550. Cysteine 553 and cysteine 586 are oxidised to a cystine.

This sequence belongs to the complement C6/C7/C8/C9 family. Heterotrimer of 3 chains: alpha (C8A), beta (C8B) and gamma (C8G); the alpha and gamma chains are disulfide bonded. Component of the membrane attack complex (MAC), composed of complement C5b, C6, C7, C8A, C8B, C8G and multiple copies of the pore-forming subunit C9.

It is found in the secreted. The protein resides in the target cell membrane. In terms of biological role, component of the membrane attack complex (MAC), a multiprotein complex activated by the complement cascade, which inserts into a target cell membrane and forms a pore, leading to target cell membrane rupture and cell lysis. The MAC is initiated by proteolytic cleavage of C5 into complement C5b in response to the classical, alternative, lectin and GZMK complement pathways. The complement pathways consist in a cascade of proteins that leads to phagocytosis and breakdown of pathogens and signaling that strengthens the adaptive immune system. C8B, together with C8A and C8G, inserts into the target membrane, but does not form pores by itself. During MAC assembly, associates with C5b, C6 and C7 to form the C5b8 intermediate complex that inserts into the target membrane and traverses the bilayer increasing membrane rigidity. The chain is Complement component C8 beta chain (c8b) from Oncorhynchus mykiss (Rainbow trout).